Consider the following 194-residue polypeptide: ATP-dependent Clp protease proteolytic subunit 3 (194 aa).

Residue Ser-96 is the Nucleophile of the active site. His-121 is an active-site residue.

Belongs to the peptidase S14 family. In terms of assembly, fourteen ClpP subunits assemble into 2 heptameric rings which stack back to back to give a disk-like structure with a central cavity, resembling the structure of eukaryotic proteasomes.

The protein localises to the cytoplasm. It carries out the reaction Hydrolysis of proteins to small peptides in the presence of ATP and magnesium. alpha-casein is the usual test substrate. In the absence of ATP, only oligopeptides shorter than five residues are hydrolyzed (such as succinyl-Leu-Tyr-|-NHMec, and Leu-Tyr-Leu-|-Tyr-Trp, in which cleavage of the -Tyr-|-Leu- and -Tyr-|-Trp bonds also occurs).. Cleaves peptides in various proteins in a process that requires ATP hydrolysis. Has a chymotrypsin-like activity. Plays a major role in the degradation of misfolded proteins. The protein is ATP-dependent Clp protease proteolytic subunit 3 of Rhizobium etli (strain ATCC 51251 / DSM 11541 / JCM 21823 / NBRC 15573 / CFN 42).